Reading from the N-terminus, the 207-residue chain is Guanylate kinase (207 aa).

The 181-residue stretch at 4-184 folds into the Guanylate kinase-like domain; it reads GTLYIVSAPS…ALSDLKTIIR (181 aa). 11-18 lines the ATP pocket; sequence APSGAGKS.

This sequence belongs to the guanylate kinase family.

The protein resides in the cytoplasm. The catalysed reaction is GMP + ATP = GDP + ADP. In terms of biological role, essential for recycling GMP and indirectly, cGMP. This Salmonella paratyphi A (strain ATCC 9150 / SARB42) protein is Guanylate kinase.